Reading from the N-terminus, the 338-residue chain is Glyceraldehyde-3-phosphate dehydrogenase GAPC2, cytosolic (338 aa).

Residues 15-16 (RI), D37, and R84 contribute to the NAD(+) site. 155–157 (SCT) is a binding site for D-glyceraldehyde 3-phosphate. Catalysis depends on C156, which acts as the Nucleophile. An S-glutathionyl cysteine; transient; alternate modification is found at C156. S-nitrosocysteine; transient; alternate is present on C156. C160 carries the post-translational modification S-nitrosocysteine; transient. Residues T186, 215-216 (TG), and R238 each bind D-glyceraldehyde 3-phosphate. N320 is a binding site for NAD(+).

Belongs to the glyceraldehyde-3-phosphate dehydrogenase family. As to quaternary structure, homotetramer. Interacts with PLDDELTA. Binds to DPB3-1/NF-YC10 in response to heat-stress; this interaction promotes DPB3-1/NF-YC10 DNA-binding ability to its target promoter. S-glutathionylation at Cys-156 in the presence of oxidized glutathione (GSSG). S-nitrosylation at Cys-156 and Cys-160 in the presence of S-nitrosoglutathione (GSNO) or sodium nitroprusside (SNP). These reactions may be both a protective mechanism against irreversible oxidation and a mean to store inhibited enzyme in a recoverable form.

Its subcellular location is the cytoplasm. The protein resides in the nucleus. It carries out the reaction D-glyceraldehyde 3-phosphate + phosphate + NAD(+) = (2R)-3-phospho-glyceroyl phosphate + NADH + H(+). It functions in the pathway carbohydrate degradation; glycolysis; pyruvate from D-glyceraldehyde 3-phosphate: step 1/5. Its activity is regulated as follows. Inhibition by oxidized glutathione (GSSG), S-nitrosoglutathione (GSNO) and hydrogen peroxide. Its function is as follows. Key enzyme in glycolysis that catalyzes the first step of the pathway by converting D-glyceraldehyde 3-phosphate (G3P) into 3-phospho-D-glyceroyl phosphate. Essential for the maintenance of cellular ATP levels and carbohydrate metabolism. Binds DNA in vitro. Together with DNA polymerase II subunit B3-1 (DPB3-1) and GAPC1, enhances heat tolerance and promotes the expression of heat-inducible genes. The protein is Glyceraldehyde-3-phosphate dehydrogenase GAPC2, cytosolic of Arabidopsis thaliana (Mouse-ear cress).